A 617-amino-acid polypeptide reads, in one-letter code: Sodium-dependent noradrenaline transporter (617 aa).

Positions 1 to 23 are disordered; sequence MLLARMNPQVQPENNGADTGPEQ. The Cytoplasmic portion of the chain corresponds to 1–62; sequence MLLARMNPQV…AQPRETWGKK (62 aa). The segment covering 8-17 has biased composition (polar residues); it reads PQVQPENNGA. The chain crosses the membrane as a helical span at residues 63–88; that stretch reads IDFLLSVVGFAVDLANVWRFPYLCYK. Positions 71, 73, and 74 each coordinate Na(+). Residue Asp75 coordinates (R)-noradrenaline. Residue Asp75 coordinates dopamine. A Na(+)-binding site is contributed by Asn78. Residues Tyr87 and Lys88 each contribute to the (R)-noradrenaline site. Residues 89 to 92 are Extracellular-facing; sequence NGGG. The chain crosses the membrane as a helical span at residues 93–116; that stretch reads AFLIPYTLFLIIAGMPLFYMELAL. Over 117–135 the chain is Cytoplasmic; it reads GQYNREGAATVWKICPFFK. Residues 136–166 traverse the membrane as a helical segment; the sequence is GVGYAVILIALYVGFYYNVIIAWSLYYLFSS. Residues Ala145 and Gly149 each contribute to the (R)-noradrenaline site. Position 145 (Ala145) interacts with dopamine. Over 167–233 the chain is Extracellular; the sequence is FTLNLPWTDC…SSGIHDIGLP (67 aa). A disulfide bridge connects residues Cys176 and Cys185. N-linked (GlcNAc...) asparagine glycosylation is found at Asn184, Asn192, and Asn198. Residues 234 to 254 traverse the membrane as a helical segment; it reads QWQLLLCLMVVVIVLYFSLWK. The Cytoplasmic segment spans residues 255–257; it reads GVK. The helical transmembrane segment at 258-282 threads the bilayer; that stretch reads TSGKVVWITATLPYFVLFVLLVHGV. Topologically, residues 283–306 are extracellular; that stretch reads TLPGASNGINAYLHIDFYRLKEAT. Residues 307 to 332 form a helical membrane-spanning segment; sequence VWIDAATQIFFSLGAGFGVLIAFASY. Residue Phe317 participates in (R)-noradrenaline binding. Phe317 contacts dopamine. Ser318 is a Na(+) binding site. Residues 333–338 are Cytoplasmic-facing; it reads NKFDNN. The chain crosses the membrane as a helical span at residues 339 to 362; it reads CYRDALLTSSINCITSFVSGFAIF. Residue Asn350 coordinates Na(+). At 363-402 the chain is on the extracellular side; it reads SILGYMAHEHKVNIEDVATEGAGLVFILYPEAISTLSGST. Glu382 serves as a coordination point for (R)-noradrenaline. Glu382 provides a ligand contact to dopamine. Residues 403–428 traverse the membrane as a helical segment; it reads FWAVVFFVMLLALGLDSSMGGMEAVI. Asp418 and Ser419 together coordinate Na(+). At 429 to 443 the chain is on the cytoplasmic side; the sequence is TGLADDFQVLKRHRK. A helical transmembrane segment spans residues 444-464; the sequence is LFTFGVTFSTFLLALFCITKG. Position 465 (Gly465) is a topological domain, extracellular. Residues 466–492 form a helical membrane-spanning segment; the sequence is IYVLTLLDTFAAGTSILFAVLMEAIGV. Residues 493–522 are Cytoplasmic-facing; it reads SWFYGVDRFSNDIQQMMGFRPGLYWRLCWK. The helical transmembrane segment at 523–545 threads the bilayer; sequence FVSPAFLLFVVVVSIINFKPLTY. Residues 546–548 are Extracellular-facing; it reads DDY. A helical transmembrane segment spans residues 549–569; that stretch reads IFPPWANWVGWGIALSSMVLV. Topologically, residues 570-617 are cytoplasmic; it reads PIYVIYKFLSTQGSLWERLAYGITPENEHHLVAQRDIRQFQLQHWLAI.

The protein belongs to the sodium:neurotransmitter symporter (SNF) (TC 2.A.22) family. SLC6A2 subfamily. Monomer. Can form homodimers in the cell membrane; homodimerization is mostly mediated by cholesterol and lipids, and regulates neurotransmitter transport activity. Interacts with PRKCABP. Palmitoylated; palmitoylation regulates protein levels and neurotransmitter transport.

The protein resides in the cell membrane. It localises to the cell projection. It is found in the axon. Its subcellular location is the synapse. The protein localises to the synaptosome. It carries out the reaction (R)-noradrenaline(out) + chloride(out) + Na(+)(out) = (R)-noradrenaline(in) + chloride(in) + Na(+)(in). The catalysed reaction is dopamine(out) + chloride(out) + Na(+)(out) = dopamine(in) + chloride(in) + Na(+)(in). The enzyme catalyses dopamine(out) + chloride(out) + 2 Na(+)(out) = dopamine(in) + chloride(in) + 2 Na(+)(in). Inhibited by mazindol, desipramine, nomifensine and nortriptyline. Mediates sodium- and chloride-dependent transport of norepinephrine (also known as noradrenaline), the primary signaling neurotransmitter in the autonomic sympathetic nervous system. Is responsible for norepinephrine re-uptake and clearance from the synaptic cleft, thus playing a crucial role in norepinephrine inactivation and homeostasis. Can also mediate sodium- and chloride-dependent transport of dopamine. This chain is Sodium-dependent noradrenaline transporter, found in Homo sapiens (Human).